Consider the following 271-residue polypeptide: High mobility group protein homolog TDP-1 (271 aa).

In terms of domain architecture, DEK-C spans Gly-8–Gln-63. The segment at Leu-75–Pro-118 is disordered. The segment covering Ser-101–Asp-116 has biased composition (basic and acidic residues). 2 DNA-binding regions (HMG box) span residues Pro-118–Lys-186 and Pro-206–Pro-270.

It localises to the nucleus. Its function is as follows. Unknown. May play a role in transcription and/or DNA replication. It is not known whether this protein is DNA sequence binding-specific or not. The sequence is that of High mobility group protein homolog TDP-1 from Trypanosoma brucei rhodesiense.